The following is a 260-amino-acid chain: GDSL esterase/lipase WDL1 (260 aa).

The signal sequence occupies residues 1–35; that stretch reads MLGFAPAPGRPLFVLFGSSIVQFSFSNGGWGAALA. The active-site Nucleophile is Ser18. Residues Asn83 and Asn150 are each glycosylated (N-linked (GlcNAc...) asparagine). Catalysis depends on residues Asp191 and His194.

It belongs to the 'GDSL' lipolytic enzyme family. As to expression, highly expressed in panicles. Expressed in shoots, mature flowers and seeds.

It localises to the endoplasmic reticulum. Involved in the organization of leaf cuticle and wax crystals. The chain is GDSL esterase/lipase WDL1 from Oryza sativa subsp. japonica (Rice).